Reading from the N-terminus, the 339-residue chain is Putative agmatine deiminase (339 aa).

Catalysis depends on Cys-331, which acts as the Amidino-cysteine intermediate.

This sequence belongs to the agmatine deiminase family.

The enzyme catalyses agmatine + H2O = N-carbamoylputrescine + NH4(+). This is Putative agmatine deiminase from Streptomyces coelicolor (strain ATCC BAA-471 / A3(2) / M145).